Reading from the N-terminus, the 228-residue chain is MNSIEFPLFDRTTKNSVISTTSNDLSNWSRLSSLWPLLYGTSCCFIEFASLIGSRFDFDRYGLVPRSSPRQADLILTAGTITMKMAPSLVRLYEQMPKPKYVIAMGACTITGGMFSTDSYSTVRGVDKLIPVDVYLPGCPPKPEAVIDAITKLRKKVSREIYEDRISSQQENRCFTINHKFRIRRSTHTGNYDQGLLDQSPSTSTSRIRPSENFFKYKSTVFSHELVN.

The [4Fe-4S] cluster site is built by Cys43, Cys44, Cys108, and Cys139.

This sequence belongs to the complex I 20 kDa subunit family. As to quaternary structure, NDH is composed of at least 16 different subunits, 5 of which are encoded in the nucleus. The cofactor is [4Fe-4S] cluster.

Its subcellular location is the plastid. The protein resides in the chloroplast thylakoid membrane. The enzyme catalyses a plastoquinone + NADH + (n+1) H(+)(in) = a plastoquinol + NAD(+) + n H(+)(out). The catalysed reaction is a plastoquinone + NADPH + (n+1) H(+)(in) = a plastoquinol + NADP(+) + n H(+)(out). Its function is as follows. NDH shuttles electrons from NAD(P)H:plastoquinone, via FMN and iron-sulfur (Fe-S) centers, to quinones in the photosynthetic chain and possibly in a chloroplast respiratory chain. The immediate electron acceptor for the enzyme in this species is believed to be plastoquinone. Couples the redox reaction to proton translocation, and thus conserves the redox energy in a proton gradient. This chain is NAD(P)H-quinone oxidoreductase subunit K, chloroplastic, found in Ceratophyllum demersum (Rigid hornwort).